Here is a 563-residue protein sequence, read N- to C-terminus: F-box/kelch-repeat protein At5g42360 (563 aa).

The region spanning Y129–R175 is the F-box domain. Kelch repeat units lie at residues W184 to E231, E232 to V282, and V355 to N402.

The sequence is that of F-box/kelch-repeat protein At5g42360 from Arabidopsis thaliana (Mouse-ear cress).